We begin with the raw amino-acid sequence, 203 residues long: GTP cyclohydrolase-2 (203 aa).

GTP is bound at residue 49–53 (RIHSE). Residues Cys54, Cys65, and Cys67 each coordinate Zn(2+). Residues Gln70, 92–94 (EGR), and Thr114 each bind GTP. Asp126 serves as the catalytic Proton acceptor. Arg128 acts as the Nucleophile in catalysis. The GTP site is built by Thr149 and Lys154.

It belongs to the GTP cyclohydrolase II family. The cofactor is Zn(2+).

It carries out the reaction GTP + 4 H2O = 2,5-diamino-6-hydroxy-4-(5-phosphoribosylamino)-pyrimidine + formate + 2 phosphate + 3 H(+). It functions in the pathway cofactor biosynthesis; riboflavin biosynthesis; 5-amino-6-(D-ribitylamino)uracil from GTP: step 1/4. Functionally, catalyzes the conversion of GTP to 2,5-diamino-6-ribosylamino-4(3H)-pyrimidinone 5'-phosphate (DARP), formate and pyrophosphate. The chain is GTP cyclohydrolase-2 from Shewanella sp. (strain MR-4).